We begin with the raw amino-acid sequence, 282 residues long: MFYSDYLKLLKIFVVGVFPCTLFVNAPHGKLAKQSKLFSKGYISGRVGWVLMELVAPLTFLYAIRNNRHFESTLPSLGDGSNRDYLDSCRKVLAGMFLVHYANRALVSPLLMAPQVSPMHWTVFVSAVLFNFLNGMSIGLYLVQASVQHHPVSIIRRYIGMFLWLMGWLGNMYHDNILYDLRRSSNKKKDPDNLDTVQSENSYYRIPYGGLFQYVSCPNYFCEWIEWFGCYLAAGPSAEPFWWFFLSEILLMLPRALKAHQWYCKKFPKYPANRRAIIPFLM.

The next 5 membrane-spanning stretches (helical) occupy residues 9-29 (LLKIFVVGVFPCTLFVNAPHG), 43-63 (ISGRVGWVLMELVAPLTFLYA), 123-143 (VFVSAVLFNFLNGMSIGLYLV), 158-178 (YIGMFLWLMGWLGNMYHDNIL), and 232-252 (LAAGPSAEPFWWFFLSEILLM).

It belongs to the steroid 5-alpha reductase family.

It is found in the endoplasmic reticulum membrane. This is an uncharacterized protein from Schizosaccharomyces pombe (strain 972 / ATCC 24843) (Fission yeast).